The chain runs to 181 residues: L-2,4-diaminobutyric acid acetyltransferase (181 aa).

The 157-residue stretch at Trp-25–Lys-181 folds into the N-acetyltransferase domain.

It belongs to the acetyltransferase family. EctA subfamily.

The catalysed reaction is L-2,4-diaminobutanoate + acetyl-CoA = (2S)-4-acetamido-2-aminobutanoate + CoA + H(+). Its pathway is amine and polyamine biosynthesis; ectoine biosynthesis; L-ectoine from L-aspartate 4-semialdehyde: step 2/3. Functionally, catalyzes the acetylation of L-2,4-diaminobutyrate (DABA) to gamma-N-acetyl-alpha,gamma-diaminobutyric acid (ADABA) with acetyl coenzyme A. The polypeptide is L-2,4-diaminobutyric acid acetyltransferase (ectA) (Vibrio parahaemolyticus serotype O3:K6 (strain RIMD 2210633)).